The following is a 275-amino-acid chain: Translation initiation factor 2 subunit alpha (275 aa).

The 72-residue stretch at 12–83 (GEFVVATVKR…RKGHIDLSLR (72 aa)) folds into the S1 motif domain.

Belongs to the eIF-2-alpha family. Heterotrimer composed of an alpha, a beta and a gamma chain.

In terms of biological role, eIF-2 functions in the early steps of protein synthesis by forming a ternary complex with GTP and initiator tRNA. The chain is Translation initiation factor 2 subunit alpha (eif2a) from Pyrococcus abyssi (strain GE5 / Orsay).